Consider the following 155-residue polypeptide: Small ribosomal subunit protein uS7c (155 aa).

This sequence belongs to the universal ribosomal protein uS7 family. In terms of assembly, part of the 30S ribosomal subunit.

It is found in the plastid. The protein localises to the chloroplast. One of the primary rRNA binding proteins, it binds directly to 16S rRNA where it nucleates assembly of the head domain of the 30S subunit. This chain is Small ribosomal subunit protein uS7c (rps7), found in Pinus koraiensis (Korean pine).